Here is a 75-residue protein sequence, read N- to C-terminus: Large ribosomal subunit protein bL31 (75 aa).

Cys-16, Cys-18, Cys-38, and Cys-41 together coordinate Zn(2+).

It belongs to the bacterial ribosomal protein bL31 family. Type A subfamily. Part of the 50S ribosomal subunit. The cofactor is Zn(2+).

Functionally, binds the 23S rRNA. This Nocardioides sp. (strain ATCC BAA-499 / JS614) protein is Large ribosomal subunit protein bL31.